The sequence spans 171 residues: KRAB domain-containing protein 4 (171 aa).

The region spanning 8 to 79 (LTFKDVFVDF…DGGTPVRTCA (72 aa)) is the KRAB domain.

In terms of tissue distribution, expressed in brain, ovary, testis, prostate, tonsil, heart, bone marrow, colon, breast and kidney.

The polypeptide is KRAB domain-containing protein 4 (KRBOX4) (Homo sapiens (Human)).